The sequence spans 187 residues: MSGPIGLEVQHPETEYRLKKVSEKFIESIHLMVNEPSVGLYRIQEHVRRSLPQLVDKKMELRSCQNQINGVCYDLDYSIKTVQSMQHIPHFTIIQECLRSAIASKKNLDAAKLERRSKKVDEGSGAQSADAVSEVSIETQDVEGFICPNCMQVLTSQDELLEHWQSQHETANDTRQGYNDDANNDQD.

Residues 165 to 187 (QSQHETANDTRQGYNDDANNDQD) form a disordered region.

Belongs to the BORCS8 family.

It localises to the lysosome membrane. May participate in the coupling of lysosomes to microtubule plus-end-directed kinesin motor. The protein is BLOC-1-related complex subunit 8 homolog of Nematostella vectensis (Starlet sea anemone).